The following is a 285-amino-acid chain: Pseudouridine-5'-phosphate glycosidase (285 aa).

Glu17 serves as the catalytic Proton donor. The substrate site is built by Lys77 and Val97. Asp126 lines the Mn(2+) pocket. 128–130 serves as a coordination point for substrate; that stretch reads SQD. Lys147 (nucleophile) is an active-site residue.

This sequence belongs to the pseudouridine-5'-phosphate glycosidase family. As to quaternary structure, homotrimer. It depends on Mn(2+) as a cofactor.

The enzyme catalyses D-ribose 5-phosphate + uracil = psi-UMP + H2O. Catalyzes the reversible cleavage of pseudouridine 5'-phosphate (PsiMP) to ribose 5-phosphate and uracil. Functions biologically in the cleavage direction, as part of a pseudouridine degradation pathway. This is Pseudouridine-5'-phosphate glycosidase from Thermotoga sp. (strain RQ2).